A 74-amino-acid polypeptide reads, in one-letter code: Conotoxin SIIID (74 aa).

The first 20 residues, 1–20 (MMSKLGVLLTVCLLLFPLTA), serve as a signal peptide directing secretion. Residues 21-53 (LPLDGDQPADQLEDRMQDDISSEQYPSFVRRQK) constitute a propeptide that is removed on maturation. 3 disulfides stabilise this stretch: Cys-54-Cys-71, Cys-55-Cys-73, and Cys-61-Cys-74.

The protein belongs to the conotoxin M superfamily. In terms of processing, three disulfide isomers have been synthesized and tested. SIIID with the disulfide pairing 1-4;2-5;3-6 is the most active. As to expression, expressed by the venom duct.

It localises to the secreted. Its function is as follows. The short synthetic peptide SIIID (range 54-74, with disulfide pairing 1-4, 2-5 and 3-6) reversibly inhibits human alpha-7/CHRNA7 acetylcholine receptor (IC(50)=880 nM). Shows a paralytic effect in fish. This Conus striatus (Striated cone) protein is Conotoxin SIIID.